The primary structure comprises 261 residues: Small ribosomal subunit protein mS23 (261 aa).

The interval 228-261 is disordered; the sequence is EQRAAAFTGAPEIPSTEDSLGLEEGVEEKQPQQA.

Belongs to the mitochondrion-specific ribosomal protein mS23 family. As to quaternary structure, component of the mitochondrial small ribosomal subunit.

It is found in the mitochondrion. The chain is Small ribosomal subunit protein mS23 (rsm25) from Aspergillus oryzae (strain ATCC 42149 / RIB 40) (Yellow koji mold).